The chain runs to 402 residues: Eukaryotic initiation factor 4A (402 aa).

The Q motif signature appears at 29–57 (ESFDDMELKEELLRGIYGFGFEKPSAIQK). The 171-residue stretch at 60 to 230 (IVPCTTGKDV…NRFMRNPIRI (171 aa)) folds into the Helicase ATP-binding domain. 73–80 (AQSGTGKT) contributes to the ATP binding site. Residues 178–181 (DEAD) carry the DEAD box motif. One can recognise a Helicase C-terminal domain in the interval 241 to 402 (GIRQFYINVQ…EMPESIADLI (162 aa)).

The protein belongs to the DEAD box helicase family. eIF4A subfamily. EIF4F is a multi-subunit complex, the composition of which varies with external and internal environmental conditions. It is composed of at least EIF4A, EIF4E and EIF4G.

It carries out the reaction ATP + H2O = ADP + phosphate + H(+). Functionally, ATP-dependent RNA helicase which is a subunit of the eIF4F complex involved in cap recognition and is required for mRNA binding to ribosome. In the current model of translation initiation, eIF4A unwinds RNA secondary structures in the 5'-UTR of mRNAs which is necessary to allow efficient binding of the small ribosomal subunit, and subsequent scanning for the initiator codon. This Caenorhabditis elegans protein is Eukaryotic initiation factor 4A (inf-1).